The following is a 178-amino-acid chain: NADH-ubiquinone oxidoreductase chain 6 (178 aa).

The next 5 helical transmembrane spans lie at 1–21 (MMTY…VGFS), 25–45 (SPIY…GIVL), 48–68 (GGSF…LVVF), 89–109 (VLLT…YLLL), and 152–172 (YGYW…IVVM).

The protein belongs to the complex I subunit 6 family.

The protein resides in the mitochondrion membrane. It carries out the reaction a ubiquinone + NADH + 5 H(+)(in) = a ubiquinol + NAD(+) + 4 H(+)(out). Its function is as follows. Core subunit of the mitochondrial membrane respiratory chain NADH dehydrogenase (Complex I) that is believed to belong to the minimal assembly required for catalysis. Complex I functions in the transfer of electrons from NADH to the respiratory chain. The immediate electron acceptor for the enzyme is believed to be ubiquinone. This is NADH-ubiquinone oxidoreductase chain 6 (MT-ND6) from Pseudosoriculus fumidus (Taiwanese brown-toothed shrew).